A 149-amino-acid polypeptide reads, in one-letter code: Hydroalkoxylation enzyme phnH (149 aa).

Positions 1–18 are cleaved as a signal peptide; the sequence is MKFTYLVSLAAFAVTALG. Asparagine 33 and asparagine 127 each carry an N-linked (GlcNAc...) asparagine glycan.

Homotetramer.

The enzyme catalyses 2,4,7,9-tetrahydroxy-6-methyl-8-(2-methylbut-3-en-2-yl)-1-oxo-1H-phenalen-3-ol = (2'R)-atrovenetin. It participates in secondary metabolite biosynthesis. Its function is as follows. Hydroalkoxylation enzyme; part of the gene cluster that mediates the biosynthesis of phenalenones such as herqueinone, compounds that have been reported to treat tumors, bacterial infections and/or mycoses, and rheumatic diseases. The non-reducing polyketide synthase phnA synthesizes the heptaketide backbone and cyclizes it into the angular, hemiketal-containing naphtho-gamma-pyrone prephenalenone. The product template (PT) domain of phnA catalyzes only the C4-C9 aldol condensation, which is unprecedented among known PT domains. The transformation of prephenalenone to phenalenones requires an FAD-dependent monooxygenase phnB, which catalyzes the C2 aromatic hydroxylation of prephenalenone and ring opening of the gamma-pyrone ring simultaneously. Subsequent intramolecular deprotonation of C3 phenolic oxygen accelerates phenalenone ring closure to yield the tricyclic phenalenone core with a C2 hydroxylation. The prenyltransferase phnF further catalyzes reverse C-prenylation of phenalenone by direct electrophilic substitution at C6, or possibly via first a forward O-prenylation of a neighboring phenol in phenalenone, followed by a Claisen rearrangement. The hydroalkoxylation enzyme phnH catalyzes the 5-exo-trig cyclization via acid catalysis after the spontaneous deprotonation of 7-OH, which leads to the formation of the dihydrobenzofuran atrovenetin. Atrovenetin is further converted to deoxyherqueinone by the O-methyltransferase phnC which can methylate C2-OH to stabilize the northern portion of the phenalenone core. Finally, the oxidoreductase phnG converts deoxyherqueinone to herqueinone via C6 hydroxylation. This Penicillium herquei protein is Hydroalkoxylation enzyme phnH.